A 488-amino-acid chain; its full sequence is 3-octaprenyl-4-hydroxybenzoate carboxy-lyase (488 aa).

N172 provides a ligand contact to Mn(2+). Prenylated FMN-binding positions include 175–177 (IYR), 189–191 (RWL), and 194–195 (RG). E238 serves as a coordination point for Mn(2+). Catalysis depends on D287, which acts as the Proton donor.

It belongs to the UbiD family. Homohexamer. Prenylated FMN is required as a cofactor. It depends on Mn(2+) as a cofactor.

Its subcellular location is the cell membrane. The catalysed reaction is a 4-hydroxy-3-(all-trans-polyprenyl)benzoate + H(+) = a 2-(all-trans-polyprenyl)phenol + CO2. It functions in the pathway cofactor biosynthesis; ubiquinone biosynthesis. Functionally, catalyzes the decarboxylation of 3-octaprenyl-4-hydroxy benzoate to 2-octaprenylphenol, an intermediate step in ubiquinone biosynthesis. The sequence is that of 3-octaprenyl-4-hydroxybenzoate carboxy-lyase from Pseudomonas putida (strain W619).